Reading from the N-terminus, the 156-residue chain is ATP synthase subunit b (156 aa).

Residues 12 to 32 (VAFFIFVLFCMKFVWPPVIAA) traverse the membrane as a helical segment.

Belongs to the ATPase B chain family. As to quaternary structure, F-type ATPases have 2 components, F(1) - the catalytic core - and F(0) - the membrane proton channel. F(1) has five subunits: alpha(3), beta(3), gamma(1), delta(1), epsilon(1). F(0) has three main subunits: a(1), b(2) and c(10-14). The alpha and beta chains form an alternating ring which encloses part of the gamma chain. F(1) is attached to F(0) by a central stalk formed by the gamma and epsilon chains, while a peripheral stalk is formed by the delta and b chains.

Its subcellular location is the cell inner membrane. Its function is as follows. F(1)F(0) ATP synthase produces ATP from ADP in the presence of a proton or sodium gradient. F-type ATPases consist of two structural domains, F(1) containing the extramembraneous catalytic core and F(0) containing the membrane proton channel, linked together by a central stalk and a peripheral stalk. During catalysis, ATP synthesis in the catalytic domain of F(1) is coupled via a rotary mechanism of the central stalk subunits to proton translocation. Functionally, component of the F(0) channel, it forms part of the peripheral stalk, linking F(1) to F(0). This chain is ATP synthase subunit b, found in Pseudomonas paraeruginosa (strain DSM 24068 / PA7) (Pseudomonas aeruginosa (strain PA7)).